The primary structure comprises 442 residues: ATP-dependent protease ATPase subunit HslU (442 aa).

ATP contacts are provided by residues Ile-18 and 60 to 65 (GVGKTE). The interval 137 to 156 (PKPKNDWESTETDSSSNTRQ) is disordered. Asp-255, Glu-320, and Arg-392 together coordinate ATP.

The protein belongs to the ClpX chaperone family. HslU subfamily. As to quaternary structure, a double ring-shaped homohexamer of HslV is capped on each side by a ring-shaped HslU homohexamer. The assembly of the HslU/HslV complex is dependent on binding of ATP.

The protein localises to the cytoplasm. Its function is as follows. ATPase subunit of a proteasome-like degradation complex; this subunit has chaperone activity. The binding of ATP and its subsequent hydrolysis by HslU are essential for unfolding of protein substrates subsequently hydrolyzed by HslV. HslU recognizes the N-terminal part of its protein substrates and unfolds these before they are guided to HslV for hydrolysis. The polypeptide is ATP-dependent protease ATPase subunit HslU (Shewanella baltica (strain OS155 / ATCC BAA-1091)).